The sequence spans 63 residues: Large ribosomal subunit protein uL29 (63 aa).

Belongs to the universal ribosomal protein uL29 family.

This chain is Large ribosomal subunit protein uL29, found in Vibrio parahaemolyticus serotype O3:K6 (strain RIMD 2210633).